Consider the following 233-residue polypeptide: Biosynthetic peptidoglycan transglycosylase (233 aa).

Residues 17–37 (IVLAVLALVVLPYVLIFFYLL) traverse the membrane as a helical segment.

It belongs to the glycosyltransferase 51 family.

It is found in the cell inner membrane. The catalysed reaction is [GlcNAc-(1-&gt;4)-Mur2Ac(oyl-L-Ala-gamma-D-Glu-L-Lys-D-Ala-D-Ala)](n)-di-trans,octa-cis-undecaprenyl diphosphate + beta-D-GlcNAc-(1-&gt;4)-Mur2Ac(oyl-L-Ala-gamma-D-Glu-L-Lys-D-Ala-D-Ala)-di-trans,octa-cis-undecaprenyl diphosphate = [GlcNAc-(1-&gt;4)-Mur2Ac(oyl-L-Ala-gamma-D-Glu-L-Lys-D-Ala-D-Ala)](n+1)-di-trans,octa-cis-undecaprenyl diphosphate + di-trans,octa-cis-undecaprenyl diphosphate + H(+). Its pathway is cell wall biogenesis; peptidoglycan biosynthesis. Peptidoglycan polymerase that catalyzes glycan chain elongation from lipid-linked precursors. This Rhizobium etli (strain ATCC 51251 / DSM 11541 / JCM 21823 / NBRC 15573 / CFN 42) protein is Biosynthetic peptidoglycan transglycosylase.